The chain runs to 256 residues: Type III pantothenate kinase (256 aa).

6–13 lines the ATP pocket; sequence DVGNTNIV. 107–110 is a binding site for substrate; it reads GADR. Residue D109 is the Proton acceptor of the active site. K(+) is bound at residue D129. T132 is an ATP binding site. T184 provides a ligand contact to substrate.

It belongs to the type III pantothenate kinase family. Homodimer. The cofactor is NH4(+). K(+) serves as cofactor.

It is found in the cytoplasm. It carries out the reaction (R)-pantothenate + ATP = (R)-4'-phosphopantothenate + ADP + H(+). It participates in cofactor biosynthesis; coenzyme A biosynthesis; CoA from (R)-pantothenate: step 1/5. Functionally, catalyzes the phosphorylation of pantothenate (Pan), the first step in CoA biosynthesis. This Pelotomaculum thermopropionicum (strain DSM 13744 / JCM 10971 / SI) protein is Type III pantothenate kinase.